A 132-amino-acid chain; its full sequence is S-protein homolog 8 (132 aa).

The first 20 residues, 1-20, serve as a signal peptide directing secretion; sequence MHSLSWFLLVIGLSVGLSSG.

It belongs to the plant self-incompatibility (S1) protein family. In terms of tissue distribution, mostly expressed in seedlings, stems, leaves and floral tissues, and, to a lower extent, in roots.

It localises to the secreted. In Arabidopsis thaliana (Mouse-ear cress), this protein is S-protein homolog 8.